A 338-amino-acid polypeptide reads, in one-letter code: UbiA prenyltransferase domain-containing protein 1 (338 aa).

Position 2 is an N-acetylalanine (alanine 2). The next 8 membrane-spanning stretches (helical) occupy residues leucine 83 to threonine 103, phenylalanine 134 to proline 154, leucine 160 to phenylalanine 180, leucine 188 to glycine 208, serine 209 to leucine 229, isoleucine 245 to leucine 267, threonine 277 to glutamate 297, and leucine 315 to leucine 335.

This sequence belongs to the UbiA prenyltransferase family. In terms of assembly, interacts with HMGCR and SOAT1. In terms of tissue distribution, ubiquitously expressed.

The protein localises to the endoplasmic reticulum membrane. The protein resides in the golgi apparatus membrane. Its subcellular location is the mitochondrion membrane. It localises to the cytoplasm. It is found in the nucleus. It catalyses the reaction menadiol + (2E,6E,10E)-geranylgeranyl diphosphate = menaquinol-4 + diphosphate. The enzyme catalyses all-trans-decaprenyl diphosphate + 4-hydroxybenzoate = 4-hydroxy-3-(all-trans-decaprenyl)benzoate + diphosphate. The protein operates within quinol/quinone metabolism; menaquinone biosynthesis. Its pathway is cofactor biosynthesis; ubiquinone biosynthesis. Prenyltransferase that mediates the formation of menaquinone-4 (MK-4) and coenzyme Q10. MK-4 is a vitamin K2 isoform present at high concentrations in the brain, kidney and pancreas, and is required for endothelial cell development. Mediates the conversion of phylloquinone (PK) into MK-4, probably by cleaving the side chain of phylloquinone (PK) to release 2-methyl-1,4-naphthoquinone (menadione; K3) and then prenylating it with geranylgeranyl pyrophosphate (GGPP) to form MK-4. Also plays a role in cardiovascular development independently of MK-4 biosynthesis, by acting as a coenzyme Q10 biosynthetic enzyme: coenzyme Q10, also named ubiquinone, plays an important antioxidant role in the cardiovascular system. Mediates biosynthesis of coenzyme Q10 in the Golgi membrane, leading to protect cardiovascular tissues from NOS3/eNOS-dependent oxidative stress. In Homo sapiens (Human), this protein is UbiA prenyltransferase domain-containing protein 1.